We begin with the raw amino-acid sequence, 433 residues long: Serine hydroxymethyltransferase (433 aa).

(6S)-5,6,7,8-tetrahydrofolate contacts are provided by residues L132 and 136–138 (GHL). K241 bears the N6-(pyridoxal phosphate)lysine mark.

It belongs to the SHMT family. In terms of assembly, homodimer. Pyridoxal 5'-phosphate is required as a cofactor.

The protein resides in the cytoplasm. The enzyme catalyses (6R)-5,10-methylene-5,6,7,8-tetrahydrofolate + glycine + H2O = (6S)-5,6,7,8-tetrahydrofolate + L-serine. It participates in one-carbon metabolism; tetrahydrofolate interconversion. The protein operates within amino-acid biosynthesis; glycine biosynthesis; glycine from L-serine: step 1/1. Its function is as follows. Catalyzes the reversible interconversion of serine and glycine with tetrahydrofolate (THF) serving as the one-carbon carrier. This reaction serves as the major source of one-carbon groups required for the biosynthesis of purines, thymidylate, methionine, and other important biomolecules. Also exhibits THF-independent aldolase activity toward beta-hydroxyamino acids, producing glycine and aldehydes, via a retro-aldol mechanism. The chain is Serine hydroxymethyltransferase from Methylobacterium sp. (strain 4-46).